Here is a 629-residue protein sequence, read N- to C-terminus: tRNA uridine 5-carboxymethylaminomethyl modification enzyme MnmG (629 aa).

Residues 14–19 (GAGHAG), Val126, and Ser181 each bind FAD. 273 to 287 (GPRYCPSIEDKVVRF) lines the NAD(+) pocket. Gln370 provides a ligand contact to FAD.

The protein belongs to the MnmG family. As to quaternary structure, homodimer. Heterotetramer of two MnmE and two MnmG subunits. FAD serves as cofactor.

The protein localises to the cytoplasm. NAD-binding protein involved in the addition of a carboxymethylaminomethyl (cmnm) group at the wobble position (U34) of certain tRNAs, forming tRNA-cmnm(5)s(2)U34. The chain is tRNA uridine 5-carboxymethylaminomethyl modification enzyme MnmG from Geobacillus thermodenitrificans (strain NG80-2).